A 341-amino-acid polypeptide reads, in one-letter code: Phosphate acyltransferase (341 aa).

This sequence belongs to the PlsX family. Homodimer. Probably interacts with PlsY.

Its subcellular location is the cytoplasm. It catalyses the reaction a fatty acyl-[ACP] + phosphate = an acyl phosphate + holo-[ACP]. Its pathway is lipid metabolism; phospholipid metabolism. In terms of biological role, catalyzes the reversible formation of acyl-phosphate (acyl-PO(4)) from acyl-[acyl-carrier-protein] (acyl-ACP). This enzyme utilizes acyl-ACP as fatty acyl donor, but not acyl-CoA. In Photobacterium profundum (strain SS9), this protein is Phosphate acyltransferase.